Here is a 300-residue protein sequence, read N- to C-terminus: MQFHSSSALITPFKKDLSVDEAAYESLIKRQIFQGMDACVPVGTTGESATLTHKEHMRCIEIAIETCKNTKTLSNSRMKVLAGVGSNATSESLSLAKFAQKIGADAILCVSPYYNRPTQQGLFEHYKTIAQSVEIPVMLYDVPSRTGVSIEISTALKLFREVPNIKAIKEASGSLKRVTELHYHEKDFKIFSGEDSLNHSIMFSGGCGVISVTGNLMPNLISQMVNCALKLEYQQALEIQNKLFHLHQALFVETNPIPIKMAMHLAGLIENPSYRLPLVAPSKETIQLLEKTLQQYEVIA.

Threonine 45 contacts pyruvate. Tyrosine 140 acts as the Proton donor/acceptor in catalysis. Catalysis depends on lysine 169, which acts as the Schiff-base intermediate with substrate. Isoleucine 210 contacts pyruvate.

It belongs to the DapA family. In terms of assembly, homotetramer; dimer of dimers.

It is found in the cytoplasm. It catalyses the reaction L-aspartate 4-semialdehyde + pyruvate = (2S,4S)-4-hydroxy-2,3,4,5-tetrahydrodipicolinate + H2O + H(+). It participates in amino-acid biosynthesis; L-lysine biosynthesis via DAP pathway; (S)-tetrahydrodipicolinate from L-aspartate: step 3/4. Catalyzes the condensation of (S)-aspartate-beta-semialdehyde [(S)-ASA] and pyruvate to 4-hydroxy-tetrahydrodipicolinate (HTPA). The polypeptide is 4-hydroxy-tetrahydrodipicolinate synthase (Helicobacter pylori (strain G27)).